Here is a 479-residue protein sequence, read N- to C-terminus: Ribulose bisphosphate carboxylase large chain (479 aa).

Residues 1–2 constitute a propeptide that is removed on maturation; the sequence is MS. The substrate site is built by Asn-123 and Thr-173. Lys-175 (proton acceptor) is an active-site residue. Lys-177 contacts substrate. 3 residues coordinate Mg(2+): Lys-201, Asp-203, and Glu-204. Position 201 is an N6-carboxylysine (Lys-201). Ser-208 carries the phosphoserine modification. His-294 serves as the catalytic Proton acceptor. 2 residues coordinate substrate: Arg-295 and His-327. Thr-330 is modified (phosphothreonine). Ser-379 is a binding site for substrate.

Belongs to the RuBisCO large chain family. Type I subfamily. As to quaternary structure, heterohexadecamer of 8 large chains and 8 small chains; disulfide-linked. The disulfide link is formed within the large subunit homodimers. Requires Mg(2+) as cofactor. Post-translationally, the disulfide bond which can form in the large chain dimeric partners within the hexadecamer appears to be associated with oxidative stress and protein turnover.

The protein resides in the plastid. Its subcellular location is the chloroplast. The catalysed reaction is 2 (2R)-3-phosphoglycerate + 2 H(+) = D-ribulose 1,5-bisphosphate + CO2 + H2O. It carries out the reaction D-ribulose 1,5-bisphosphate + O2 = 2-phosphoglycolate + (2R)-3-phosphoglycerate + 2 H(+). Functionally, ruBisCO catalyzes two reactions: the carboxylation of D-ribulose 1,5-bisphosphate, the primary event in carbon dioxide fixation, as well as the oxidative fragmentation of the pentose substrate in the photorespiration process. Both reactions occur simultaneously and in competition at the same active site. The chain is Ribulose bisphosphate carboxylase large chain from Draba nemorosa (Woodland whitlowgrass).